The primary structure comprises 102 residues: Small ribosomal subunit protein uS10 (102 aa).

Belongs to the universal ribosomal protein uS10 family. Part of the 30S ribosomal subunit.

Its function is as follows. Involved in the binding of tRNA to the ribosomes. In Desulfitobacterium hafniense (strain DSM 10664 / DCB-2), this protein is Small ribosomal subunit protein uS10.